The following is a 384-amino-acid chain: Carbamoyl phosphate synthase small chain (384 aa).

Positions 1-192 (MMKRIPAILV…LTDNIRVHRV (192 aa)) are CPSase. Positions 51, 244, and 246 each coordinate L-glutamine. The Glutamine amidotransferase type-1 domain occupies 196–382 (KVIVIDFGVK…IEIMTKSKNK (187 aa)). The active-site Nucleophile is cysteine 272. The L-glutamine site is built by methionine 273, glutamine 276, asparagine 312, glycine 314, and phenylalanine 315. Residues histidine 355 and glutamate 357 contribute to the active site.

The protein belongs to the CarA family. In terms of assembly, composed of two chains; the small (or glutamine) chain promotes the hydrolysis of glutamine to ammonia, which is used by the large (or ammonia) chain to synthesize carbamoyl phosphate. Tetramer of heterodimers (alpha,beta)4.

It is found in the plastid. The protein localises to the chloroplast. It carries out the reaction hydrogencarbonate + L-glutamine + 2 ATP + H2O = carbamoyl phosphate + L-glutamate + 2 ADP + phosphate + 2 H(+). It catalyses the reaction L-glutamine + H2O = L-glutamate + NH4(+). The protein operates within amino-acid biosynthesis; L-arginine biosynthesis; carbamoyl phosphate from bicarbonate: step 1/1. Its pathway is pyrimidine metabolism; UMP biosynthesis via de novo pathway; (S)-dihydroorotate from bicarbonate: step 1/3. Small subunit of the glutamine-dependent carbamoyl phosphate synthetase (CPSase). CPSase catalyzes the formation of carbamoyl phosphate from the ammonia moiety of glutamine, carbonate, and phosphate donated by ATP, constituting the first step of 2 biosynthetic pathways, one leading to arginine and/or urea and the other to pyrimidine nucleotides. The small subunit (glutamine amidotransferase) binds and cleaves glutamine to supply the large subunit with the substrate ammonia. The protein is Carbamoyl phosphate synthase small chain of Pyropia yezoensis (Susabi-nori).